We begin with the raw amino-acid sequence, 463 residues long: A-type ATP synthase subunit B (463 aa).

This sequence belongs to the ATPase alpha/beta chains family. As to quaternary structure, has multiple subunits with at least A(3), B(3), C, D, E, F, H, I and proteolipid K(x).

The protein resides in the cell membrane. In terms of biological role, component of the A-type ATP synthase that produces ATP from ADP in the presence of a proton gradient across the membrane. The B chain is a regulatory subunit. The chain is A-type ATP synthase subunit B from Thermococcus gammatolerans (strain DSM 15229 / JCM 11827 / EJ3).